Here is a 156-residue protein sequence, read N- to C-terminus: Flagellar assembly factor FliW (156 aa).

Belongs to the FliW family. In terms of assembly, interacts with translational regulator CsrA and flagellin(s).

Its subcellular location is the cytoplasm. Its function is as follows. Acts as an anti-CsrA protein, binds CsrA and prevents it from repressing translation of its target genes, one of which is flagellin. Binds to flagellin and participates in the assembly of the flagellum. The polypeptide is Flagellar assembly factor FliW (Syntrophomonas wolfei subsp. wolfei (strain DSM 2245B / Goettingen)).